We begin with the raw amino-acid sequence, 65 residues long: Toxin VmKTx1 (65 aa).

An N-terminal signal peptide occupies residues 1–21; it reads MKTSCLLTILLLSFLVAVAVA. The propeptide occupies 22-28; it reads EGERSAR. 4 cysteine pairs are disulfide-bonded: C34-C54, C40-C59, C44-C61, and C49-C64. C64 carries the post-translational modification Cysteine amide.

It belongs to the short scorpion toxin superfamily. Potassium channel inhibitor family. Alpha-KTx 23 subfamily. Expressed by the venom gland.

It is found in the secreted. Voltage-gated potassium channel inhibitor. Selectively and reversibly binds (Kd=0.77 nM) and blocks hKv1.3/KCNA3 potassium channels of human T-lymphocytes. Also shows a very weak effect on hKv1.2/KCNA2 (Kd=7.1 uM). Also reduces the fraction of CD40L expressing T cells that are stimulated by alphaCD3/alphaCD28. The protein is Toxin VmKTx1 of Vaejovis mexicanus smithi (Mexican scorpion).